We begin with the raw amino-acid sequence, 769 residues long: Disintegrin and metalloproteinase domain-containing protein 11 (769 aa).

The first 23 residues, 1–23 (MRLLRRWAFAALLLSLLPTPGLG), serve as a signal peptide directing secretion. Positions 24–225 (TQGPAGALRW…PNRPRLRRKR (202 aa)) are excised as a propeptide. A disordered region spans residues 40-78 (GGPGAPEVTEPSRLVRESSGGEVRKQQLDTRVRQEPPGG). A compositionally biased stretch (basic and acidic residues) spans 61-73 (EVRKQQLDTRVRQ). Asn-96 and Asn-163 each carry an N-linked (GlcNAc...) asparagine glycan. The Extracellular portion of the chain corresponds to 226–734 (QVRRGHPTVH…ERYKGPSGTN (509 aa)). Residues 239–438 (KYVELIVIND…GGGSCLFNKP (200 aa)) enclose the Peptidase M12B domain. The tract at residues 332–769 (GRTFQSTSSG…NIRRGRSGGA (438 aa)) is required for localization to cerebellar cortex basket cell terminals. Also required for localization of KCNA1, KCNA2, DLG4 and ADAM22 to cerebellar cortex basket cell terminal perisomatic axons and pinceaux. Cystine bridges form between Cys-349–Cys-433, Cys-392–Cys-417, Cys-394–Cys-401, and Cys-503–Cys-523. The Disintegrin domain occupies 444 to 531 (PPECGNGFVE…QCPPNLHKLD (88 aa)). N-linked (GlcNAc...) asparagine glycans are attached at residues Asn-605 and Asn-673. 3 disulfides stabilise this stretch: Cys-677–Cys-692, Cys-686–Cys-698, and Cys-700–Cys-709. Residues 677-709 (CPGSGERRICSHHGVCSNEGKCICQPDWTGKDC) enclose the EGF-like domain. Residues 735 to 755 (IIIGSIAGAVLVAAIVLGGTG) traverse the membrane as a helical segment. The Cytoplasmic segment spans residues 756-769 (WGFKNIRRGRSGGA).

As to quaternary structure, interacts with LGI1 and LGI4. Interacts with KCNA1/KV1.1, KCNA2/KV1.2, DLG4/PSD-95 and ADAM22. In terms of processing, the precursor is cleaved by a furin endopeptidase. Expressed predominantly in brain. Slightly detected or not at all in other tissues.

The protein resides in the presynaptic cell membrane. The protein localises to the perikaryon. Its subcellular location is the cell projection. It is found in the axon. Its function is as follows. Probable ligand for integrin in the brain. This is a non catalytic metalloprotease-like protein. Required for localization of the potassium channel subunit proteins KCNA1/KV1.1 and KCNA2/KV1.2 at cerebellar cortex basket cell distal terminals, is thereby involved in ephaptic inhibitory synchronization of Purkinje cell firing and response to stress. Plays a role in spatial learning and motor coordination. Involved in the nociceptive pain response to chemical-derived stimulation. This Homo sapiens (Human) protein is Disintegrin and metalloproteinase domain-containing protein 11 (ADAM11).